An 88-amino-acid chain; its full sequence is Sec-independent protein translocase protein TatA (88 aa).

Residues 1-21 (MGGASIWHWIVVGVIVMLLFG) form a helical membrane-spanning segment. Positions 62–88 (TEPVRTLPPHPTEPAPATHATVDRKVV) are disordered.

Belongs to the TatA/E family. In terms of assembly, the Tat system comprises two distinct complexes: a TatABC complex, containing multiple copies of TatA, TatB and TatC subunits, and a separate TatA complex, containing only TatA subunits. Substrates initially bind to the TatABC complex, which probably triggers association of the separate TatA complex to form the active translocon.

It localises to the cell inner membrane. Functionally, part of the twin-arginine translocation (Tat) system that transports large folded proteins containing a characteristic twin-arginine motif in their signal peptide across membranes. TatA could form the protein-conducting channel of the Tat system. The sequence is that of Sec-independent protein translocase protein TatA from Methylobacterium sp. (strain 4-46).